Reading from the N-terminus, the 20-residue chain is Peroxidase 1 (20 aa).

A heme-binding site is contributed by H14. T15 contacts Ca(2+).

The protein belongs to the peroxidase family. Classical plant (class III) peroxidase subfamily. Ca(2+) serves as cofactor. The cofactor is heme b.

The protein localises to the secreted. It catalyses the reaction 2 a phenolic donor + H2O2 = 2 a phenolic radical donor + 2 H2O. Functionally, removal of H(2)O(2), oxidation of toxic reductants, biosynthesis and degradation of lignin, suberization, auxin catabolism, response to environmental stresses such as wounding, pathogen attack and oxidative stress. These functions might be dependent on each isozyme/isoform in each plant tissue. The polypeptide is Peroxidase 1 (Betula pendula (European white birch)).